We begin with the raw amino-acid sequence, 202 residues long: Putative 3-methyladenine DNA glycosylase (202 aa).

The protein belongs to the DNA glycosylase MPG family.

In Staphylococcus haemolyticus (strain JCSC1435), this protein is Putative 3-methyladenine DNA glycosylase.